Reading from the N-terminus, the 374-residue chain is UDP-N-acetylglucosamine--N-acetylmuramyl-(pentapeptide) pyrophosphoryl-undecaprenol N-acetylglucosamine transferase (374 aa).

UDP-N-acetyl-alpha-D-glucosamine-binding positions include threonine 10–glycine 12, asparagine 124, arginine 166, serine 196, and glutamine 294.

The protein belongs to the glycosyltransferase 28 family. MurG subfamily.

The protein resides in the cell membrane. It carries out the reaction di-trans,octa-cis-undecaprenyl diphospho-N-acetyl-alpha-D-muramoyl-L-alanyl-D-glutamyl-meso-2,6-diaminopimeloyl-D-alanyl-D-alanine + UDP-N-acetyl-alpha-D-glucosamine = di-trans,octa-cis-undecaprenyl diphospho-[N-acetyl-alpha-D-glucosaminyl-(1-&gt;4)]-N-acetyl-alpha-D-muramoyl-L-alanyl-D-glutamyl-meso-2,6-diaminopimeloyl-D-alanyl-D-alanine + UDP + H(+). The protein operates within cell wall biogenesis; peptidoglycan biosynthesis. In terms of biological role, cell wall formation. Catalyzes the transfer of a GlcNAc subunit on undecaprenyl-pyrophosphoryl-MurNAc-pentapeptide (lipid intermediate I) to form undecaprenyl-pyrophosphoryl-MurNAc-(pentapeptide)GlcNAc (lipid intermediate II). This chain is UDP-N-acetylglucosamine--N-acetylmuramyl-(pentapeptide) pyrophosphoryl-undecaprenol N-acetylglucosamine transferase, found in Symbiobacterium thermophilum (strain DSM 24528 / JCM 14929 / IAM 14863 / T).